A 299-amino-acid chain; its full sequence is Virginiamycin B lyase (299 aa).

His229 contacts substrate. Glu269 lines the Mg(2+) pocket. The active-site Proton acceptor is His271. Glu286 contributes to the Mg(2+) binding site.

The protein belongs to the Vgb family. As to quaternary structure, monomer. Requires Mg(2+) as cofactor.

Its function is as follows. Inactivates the type B streptogramin antibiotics by linearizing the lactone ring at the ester linkage, generating a free phenylglycine carboxylate and converting the threonyl moiety into 2-amino-butenoic acid. The sequence is that of Virginiamycin B lyase from Bordetella parapertussis (strain 12822 / ATCC BAA-587 / NCTC 13253).